The following is a 269-amino-acid chain: UPF0494 membrane protein C1348.01 (269 aa).

The next 4 membrane-spanning stretches (helical) occupy residues 107 to 127 (WPLL…KFEV), 144 to 164 (IWVP…SLIF), 177 to 197 (GVII…IAAL), and 201 to 221 (ITGL…LSLG).

The protein belongs to the UPF0494 family.

The protein localises to the vacuole membrane. The polypeptide is UPF0494 membrane protein C1348.01 (Schizosaccharomyces pombe (strain 972 / ATCC 24843) (Fission yeast)).